Here is a 302-residue protein sequence, read N- to C-terminus: Nucleotide-binding protein Bmul_0520/BMULJ_02739 (302 aa).

8-15 (GISGSGKS) lines the ATP pocket. 57–60 (DARS) provides a ligand contact to GTP.

This sequence belongs to the RapZ-like family.

In terms of biological role, displays ATPase and GTPase activities. In Burkholderia multivorans (strain ATCC 17616 / 249), this protein is Nucleotide-binding protein Bmul_0520/BMULJ_02739.